Consider the following 304-residue polypeptide: ADP-polyphosphate phosphotransferase (304 aa).

This sequence belongs to the polyphosphate kinase 2 (PPK2) family. Class I subfamily.

It carries out the reaction [phosphate](n) + ATP = [phosphate](n+1) + ADP. Its function is as follows. Uses inorganic polyphosphate (polyP) as a donor to convert ADP to ATP. The polypeptide is ADP-polyphosphate phosphotransferase (Pseudomonas aeruginosa (strain ATCC 15692 / DSM 22644 / CIP 104116 / JCM 14847 / LMG 12228 / 1C / PRS 101 / PAO1)).